A 150-amino-acid chain; its full sequence is MDIIFVCTGNTCRSPMAEALFKSIAEREGLNVNVRSAGVFASPNGKATPHAVEALFEKHIALNHVSSPLTEELMESADLVLAMTHQHKQIIASQFGRYRDKVFTLKEYVTGSHGDVLDPFGGSIDIYKQTRDELEELLRQLAKQLKKDRR.

The active-site Nucleophile is the C7. Residue T8–R13 participates in substrate binding. R13 is an active-site residue. Residue D118 is the Proton donor/acceptor of the active site.

It belongs to the low molecular weight phosphotyrosine protein phosphatase family.

It catalyses the reaction N(omega)-phospho-L-arginyl-[protein] + H2O = L-arginyl-[protein] + phosphate. Efficiently inhibited by Cu(2+) ion, Zn(2+) ion, sodium pyrophosphate and N-ethylmaleimide, while the addition of Mg(2+), Ca(2+) or Fe(3+) ions has minimal effect. Inhibited in a competitive manner by vanadate. In terms of biological role, catalyzes the specific dephosphorylation of phosphoarginine residues in a large number of proteins. Counteracts the protein arginine kinase McsB in vivo. Can dephosphorylate CtsR-P; thus, can restore the DNA-binding ability of the CtsR repressor by reversing the McsB-mediated phosphorylation. Is the only active pArg phosphatase present in B.subtilis. Exhibits almost no activity against pSer, pThr, or pTyr peptides. Appears to play a role in B.subtilis stress resistance. Protein arginine phosphorylation has a physiologically important role and is involved in the regulation of many critical cellular processes, such as protein homeostasis, motility, competence, and stringent and stress responses, by regulating gene expression and protein activity. The sequence is that of Protein-arginine-phosphatase (ywlE) from Bacillus subtilis (strain 168).